Consider the following 207-residue polypeptide: Large ribosomal subunit protein uL4 (207 aa).

The segment at Lys48–Gly70 is disordered.

This sequence belongs to the universal ribosomal protein uL4 family. As to quaternary structure, part of the 50S ribosomal subunit.

In terms of biological role, one of the primary rRNA binding proteins, this protein initially binds near the 5'-end of the 23S rRNA. It is important during the early stages of 50S assembly. It makes multiple contacts with different domains of the 23S rRNA in the assembled 50S subunit and ribosome. Its function is as follows. Forms part of the polypeptide exit tunnel. The protein is Large ribosomal subunit protein uL4 of Francisella philomiragia subsp. philomiragia (strain ATCC 25017 / CCUG 19701 / FSC 153 / O#319-036).